The sequence spans 444 residues: Adenylosuccinate synthetase (444 aa).

GTP contacts are provided by residues 13–19 and 41–43; these read GDEGKGK and GHT. Residue Asp14 is the Proton acceptor of the active site. Asp14 and Gly41 together coordinate Mg(2+). IMP-binding positions include 14-17, 39-42, Thr129, Arg143, Gln224, Thr239, and Arg303; these read DEGK and NAGH. His42 acts as the Proton donor in catalysis. 299-305 lines the substrate pocket; the sequence is TTTGRRR. GTP contacts are provided by residues Arg305, 331 to 333, and 413 to 415; these read KLD and SLG.

This sequence belongs to the adenylosuccinate synthetase family. Homodimer. Requires Mg(2+) as cofactor.

It localises to the cytoplasm. It carries out the reaction IMP + L-aspartate + GTP = N(6)-(1,2-dicarboxyethyl)-AMP + GDP + phosphate + 2 H(+). Its pathway is purine metabolism; AMP biosynthesis via de novo pathway; AMP from IMP: step 1/2. In terms of biological role, plays an important role in the de novo pathway of purine nucleotide biosynthesis. Catalyzes the first committed step in the biosynthesis of AMP from IMP. The polypeptide is Adenylosuccinate synthetase (Synechocystis sp. (strain ATCC 27184 / PCC 6803 / Kazusa)).